Consider the following 382-residue polypeptide: S-adenosylmethionine synthase (382 aa).

Residue H16 participates in ATP binding. D18 contacts Mg(2+). E44 is a binding site for K(+). L-methionine-binding residues include E57 and Q100. The flexible loop stretch occupies residues 100–110 (QSADIAIGVDE). Residues 165–167 (DAK), D240, 246–247 (RK), A263, and K267 each bind ATP. Residue D240 coordinates L-methionine. Position 271 (K271) interacts with L-methionine.

It belongs to the AdoMet synthase family. As to quaternary structure, homotetramer; dimer of dimers. Requires Mg(2+) as cofactor. It depends on K(+) as a cofactor.

It is found in the cytoplasm. The catalysed reaction is L-methionine + ATP + H2O = S-adenosyl-L-methionine + phosphate + diphosphate. The protein operates within amino-acid biosynthesis; S-adenosyl-L-methionine biosynthesis; S-adenosyl-L-methionine from L-methionine: step 1/1. In terms of biological role, catalyzes the formation of S-adenosylmethionine (AdoMet) from methionine and ATP. The overall synthetic reaction is composed of two sequential steps, AdoMet formation and the subsequent tripolyphosphate hydrolysis which occurs prior to release of AdoMet from the enzyme. The chain is S-adenosylmethionine synthase from Alcanivorax borkumensis (strain ATCC 700651 / DSM 11573 / NCIMB 13689 / SK2).